We begin with the raw amino-acid sequence, 661 residues long: Kyphoscoliosis peptidase (661 aa).

The span at 28–41 (GTLSDQQANPSSLL) shows a compositional bias: polar residues. Disordered regions lie at residues 28-47 (GTLS…GGGF) and 115-136 (QGDK…HAYP). Residues Cys-225, His-267, and Asp-282 contribute to the active site.

This sequence belongs to the transglutaminase-like superfamily. As to quaternary structure, interacts with IGFN1 and FLNC. As to expression, highly expressed in skeletal muscle.

Its subcellular location is the cytoplasm. The protein localises to the cytoskeleton. It localises to the myofibril. The protein resides in the sarcomere. It is found in the z line. In terms of biological role, probable cytoskeleton-associated protease required for normal muscle growth. Involved in function, maturation and stabilization of the neuromuscular junction. May act by cleaving muscle-specific proteins such as FLNC. The chain is Kyphoscoliosis peptidase from Homo sapiens (Human).